A 276-amino-acid chain; its full sequence is 3-methyl-2-oxobutanoate hydroxymethyltransferase (276 aa).

2 residues coordinate Mg(2+): Asp45 and Asp84. 3-methyl-2-oxobutanoate contacts are provided by residues 45 to 46, Asp84, and Lys114; that span reads DS. Residue Glu116 coordinates Mg(2+). The Proton acceptor role is filled by Glu183.

It belongs to the PanB family. As to quaternary structure, homodecamer; pentamer of dimers. Mg(2+) serves as cofactor.

It localises to the cytoplasm. It catalyses the reaction 3-methyl-2-oxobutanoate + (6R)-5,10-methylene-5,6,7,8-tetrahydrofolate + H2O = 2-dehydropantoate + (6S)-5,6,7,8-tetrahydrofolate. Its pathway is cofactor biosynthesis; (R)-pantothenate biosynthesis; (R)-pantoate from 3-methyl-2-oxobutanoate: step 1/2. In terms of biological role, catalyzes the reversible reaction in which hydroxymethyl group from 5,10-methylenetetrahydrofolate is transferred onto alpha-ketoisovalerate to form ketopantoate. The chain is 3-methyl-2-oxobutanoate hydroxymethyltransferase from Syntrophomonas wolfei subsp. wolfei (strain DSM 2245B / Goettingen).